Here is a 183-residue protein sequence, read N- to C-terminus: MNKDNLIQNYAVALFNNALLDNIQVTIFEEITLLNRIIEDSFDIKEFLISPIVNKIDKINVINSLIKNTKLNKIVNNFLLLLIKNSRTHILSNIVEAYNKLLYESRNIKIVQVISSNQLQPREQEWIQYRIEKELQQKTALFFDIDNTIIGGIVIKYDNVLRDYSIKGSLEKIAKCLKNVKVC.

This sequence belongs to the ATPase delta chain family. In terms of assembly, F-type ATPases have 2 components, F(1) - the catalytic core - and F(0) - the membrane proton channel. F(1) has five subunits: alpha(3), beta(3), gamma(1), delta(1), epsilon(1). F(0) has three main subunits: a(1), b(2) and c(10-14). The alpha and beta chains form an alternating ring which encloses part of the gamma chain. F(1) is attached to F(0) by a central stalk formed by the gamma and epsilon chains, while a peripheral stalk is formed by the delta and b chains.

It localises to the cell inner membrane. F(1)F(0) ATP synthase produces ATP from ADP in the presence of a proton or sodium gradient. F-type ATPases consist of two structural domains, F(1) containing the extramembraneous catalytic core and F(0) containing the membrane proton channel, linked together by a central stalk and a peripheral stalk. During catalysis, ATP synthesis in the catalytic domain of F(1) is coupled via a rotary mechanism of the central stalk subunits to proton translocation. Functionally, this protein is part of the stalk that links CF(0) to CF(1). It either transmits conformational changes from CF(0) to CF(1) or is implicated in proton conduction. This chain is ATP synthase subunit delta, found in Rickettsia typhi (strain ATCC VR-144 / Wilmington).